A 254-amino-acid chain; its full sequence is Insulin-like growth factor-binding protein 4 (254 aa).

An N-terminal signal peptide occupies residues 1–21; that stretch reads MLPFGLVAALLLAAGPRPSLG. The IGFBP N-terminal domain maps to 23–103; sequence EAIHCPPCSE…MHGQGVCTEL (81 aa). 6 disulfides stabilise this stretch: cysteine 27/cysteine 53, cysteine 30/cysteine 55, cysteine 38/cysteine 56, cysteine 44/cysteine 59, cysteine 67/cysteine 80, and cysteine 74/cysteine 100. N-linked (GlcNAc...) asparagine glycosylation is present at asparagine 125. Disulfide bonds link cysteine 131–cysteine 138, cysteine 170–cysteine 200, cysteine 211–cysteine 222, and cysteine 224–cysteine 245. The 79-residue stretch at 167 to 245 folds into the Thyroglobulin type-1 domain; it reads QGSCQSELHR…GLEPKGELDC (79 aa). Serine 251 carries the phosphoserine modification.

As to quaternary structure, binds IGF2 more than IGF1.

It is found in the secreted. In terms of biological role, IGF-binding proteins prolong the half-life of the IGFs and have been shown to either inhibit or stimulate the growth promoting effects of the IGFs on cell culture. They alter the interaction of IGFs with their cell surface receptors. This Mus musculus (Mouse) protein is Insulin-like growth factor-binding protein 4 (Igfbp4).